A 321-amino-acid chain; its full sequence is MSKPIQMERGVKYRDADKMALIPVKTVMTERTEILRKPEWMKIKLPADSSRIQGIKSAMRKNGLHSVCEEASCPNLAECFNHGTATFMILGAICTRRCPFCDVAHGRPMAPDTNEPVKLAQTIKDMALRYVVITSVDRDDLRDGGAQHFADCISAIREKNPSIKIETLVPDFRGRMDRALEILTATPPDVFNHNLENVPRVYRQVRPGANYEWSLKLLEKFKEAHPDIPTKSGLMVGLGETNEEILDVMRDLRRHGVTMLTLGQYLQPSRHHLPVQRYVSPQEFDEMKEEALAMGFTHAACGPFVRSSYHADLQAKGEEVK.

[4Fe-4S] cluster contacts are provided by C68, C73, C79, C94, C98, C101, and S308. One can recognise a Radical SAM core domain in the interval 80 to 297; it reads FNHGTATFMI…KEEALAMGFT (218 aa).

The protein belongs to the radical SAM superfamily. Lipoyl synthase family. Requires [4Fe-4S] cluster as cofactor.

The protein resides in the cytoplasm. The enzyme catalyses [[Fe-S] cluster scaffold protein carrying a second [4Fe-4S](2+) cluster] + N(6)-octanoyl-L-lysyl-[protein] + 2 oxidized [2Fe-2S]-[ferredoxin] + 2 S-adenosyl-L-methionine + 4 H(+) = [[Fe-S] cluster scaffold protein] + N(6)-[(R)-dihydrolipoyl]-L-lysyl-[protein] + 4 Fe(3+) + 2 hydrogen sulfide + 2 5'-deoxyadenosine + 2 L-methionine + 2 reduced [2Fe-2S]-[ferredoxin]. It participates in protein modification; protein lipoylation via endogenous pathway; protein N(6)-(lipoyl)lysine from octanoyl-[acyl-carrier-protein]: step 2/2. Catalyzes the radical-mediated insertion of two sulfur atoms into the C-6 and C-8 positions of the octanoyl moiety bound to the lipoyl domains of lipoate-dependent enzymes, thereby converting the octanoylated domains into lipoylated derivatives. This Photorhabdus laumondii subsp. laumondii (strain DSM 15139 / CIP 105565 / TT01) (Photorhabdus luminescens subsp. laumondii) protein is Lipoyl synthase.